Reading from the N-terminus, the 130-residue chain is uncharacterized protein (130 aa).

Positions 1–26 (MKFIYKLLFILSIVLFLFNNIITING) are cleaved as a signal peptide. Asn-88 is a glycosylation site (N-linked (GlcNAc...) asparagine).

Its subcellular location is the secreted. This is an uncharacterized protein from Dictyostelium discoideum (Social amoeba).